Reading from the N-terminus, the 483-residue chain is Cobyric acid synthase (483 aa).

The GATase cobBQ-type domain occupies 244 to 430 (WLRVIAPVLP…LHGLFDHAEA (187 aa)). The Nucleophile role is filled by C325. H422 is an active-site residue.

It belongs to the CobB/CobQ family. CobQ subfamily.

The protein operates within cofactor biosynthesis; adenosylcobalamin biosynthesis. Functionally, catalyzes amidations at positions B, D, E, and G on adenosylcobyrinic A,C-diamide. NH(2) groups are provided by glutamine, and one molecule of ATP is hydrogenolyzed for each amidation. This chain is Cobyric acid synthase, found in Methylobacillus flagellatus (strain ATCC 51484 / DSM 6875 / VKM B-1610 / KT).